The following is an 82-amino-acid chain: RNA-binding protein Hfq (82 aa).

Residues 11–71 (DTFLNHVRKT…ISTIMPGAPI (61 aa)) enclose the Sm domain.

The protein belongs to the Hfq family. In terms of assembly, homohexamer.

RNA chaperone that binds small regulatory RNA (sRNAs) and mRNAs to facilitate mRNA translational regulation in response to envelope stress, environmental stress and changes in metabolite concentrations. Also binds with high specificity to tRNAs. This chain is RNA-binding protein Hfq, found in Rhodopseudomonas palustris (strain BisA53).